We begin with the raw amino-acid sequence, 385 residues long: Leucine aminopeptidase 1 (385 aa).

Residues 1-19 form the signal peptide; it reads MKFPSFLSLGIAASTTALA. The propeptide occupies 20 to 87; that stretch reads ALPDQKPIGD…FPRAFAKTAV (68 aa). N177 is a glycosylation site (N-linked (GlcNAc...) asparagine). 2 residues coordinate Zn(2+): H185 and D204. N-linked (GlcNAc...) asparagine glycosylation occurs at N229. 2 residues coordinate Zn(2+): E243 and D270. Residues C319 and C323 are joined by a disulfide bond. H352 contacts Zn(2+).

It belongs to the peptidase M28 family. M28E subfamily. Monomer. Requires Zn(2+) as cofactor.

Its subcellular location is the secreted. Extracellular aminopeptidase that allows assimilation of proteinaceous substrates. This chain is Leucine aminopeptidase 1 (LAP1), found in Ajellomyces dermatitidis (strain ER-3 / ATCC MYA-2586) (Blastomyces dermatitidis).